The primary structure comprises 345 residues: MKVAIIGATGYGGIELIRLLEQHPYFSIASLHSFSQVGECITNVYPHFQNVLVHTLQEIDVEEIEKEAEIVFLATPAGVSAELTPKLLAVGLKVIDLSGDFRMKDPFIYEKWYKRVAAKEGVLREAVYGLSEWKRYEIQKANLIANPGCFATAALLAVLPLVRSGIIEEDSIIIDAKSGVSGAGKTPTTMTHFPELYDNLRIYKVNEHQHVPEIEQMLTEWNRETKPITFSTHLIPISRGIMVTLYAKVKREMEIEQLQQLYEKAYEQSAFVRIRMQGEFPSPKEVRGSNYCDMGIAYDERTGRVTVVSVIDNMMKGAAGQAIQNANIVAGLEETTGLQHMPLYL.

Cysteine 149 is a catalytic residue.

This sequence belongs to the NAGSA dehydrogenase family. Type 1 subfamily.

It is found in the cytoplasm. It catalyses the reaction N-acetyl-L-glutamate 5-semialdehyde + phosphate + NADP(+) = N-acetyl-L-glutamyl 5-phosphate + NADPH + H(+). It participates in amino-acid biosynthesis; L-arginine biosynthesis; N(2)-acetyl-L-ornithine from L-glutamate: step 3/4. Functionally, catalyzes the NADPH-dependent reduction of N-acetyl-5-glutamyl phosphate to yield N-acetyl-L-glutamate 5-semialdehyde. This chain is N-acetyl-gamma-glutamyl-phosphate reductase, found in Bacillus thuringiensis subsp. konkukian (strain 97-27).